A 797-amino-acid chain; its full sequence is Calcium-transporting ATPase CtpE (797 aa).

3 helical membrane-spanning segments follow: residues 55-75 (LLLI…LLII), 215-235 (ILQF…YTQL), and 254-274 (VPMV…VGVV). D301 serves as the catalytic 4-aspartylphosphate intermediate. Residues D301, T303, and D536 each coordinate Mg(2+). The next 6 helical transmembrane spans lie at 601–621 (TVYS…AIPL), 633–653 (IHVT…LSLA), 667–687 (VMTS…VTYL), 703–723 (ASTA…AVIA), 729–749 (WRLA…SLPL), and 764–784 (TSIA…MWWI).

It belongs to the cation transport ATPase (P-type) (TC 3.A.3) family.

It is found in the cell membrane. The enzyme catalyses Ca(2+)(in) + ATP + H2O = Ca(2+)(out) + ADP + phosphate + H(+). In terms of biological role, P-type ATPase involved in specific uptake of calcium. This Mycobacterium tuberculosis (strain CDC 1551 / Oshkosh) protein is Calcium-transporting ATPase CtpE (ctpE).